The sequence spans 318 residues: MSDNQQNLRLTARVGYEAHFSWSYLKPQYWGIWLGIFFLLLLAFVPFRLRDKLTGKLGIWIGHKAKKQRTRAQTNLQYCFPHWTEQQREQVIDKMFAVVAQVMFGIGEIAIRSKKHLQKRSEFIGLEHIEQAKAEGKNIILMVPHGWAIDASGIILHTQGMPMTSMYNPHRNPLVDWLWTITRQRFGGKMHARQNGIKPFLSHVRKGEMGYYLPDEDFGAEQSVFVDFFGTYKATLPGLNKMAKLSKAVVIPMFPRYNAETGKYEMEIHPAMNLSDDPEQSARAMNEEIESFVTPAPEQYVWILQLLRTRKDGEDLYD.

Residues P27–F47 form a helical membrane-spanning segment. The HXXXXD motif signature appears at H145 to D150.

It belongs to the LpxL/LpxM/LpxP family. LpxM subfamily.

Its subcellular location is the cell inner membrane. The catalysed reaction is an alpha-Kdo-(2-&gt;4)-alpha-Kdo-(2-&gt;6)-(acyl)-lipid IVA + a fatty acyl-[ACP] = an alpha-Kdo-(2-&gt;4)-alpha-Kdo-(2-&gt;6)-lipid A + holo-[ACP]. It functions in the pathway glycolipid biosynthesis; KDO(2)-lipid A biosynthesis; KDO(2)-lipid A from CMP-3-deoxy-D-manno-octulosonate and lipid IV(A): step 4/4. It participates in bacterial outer membrane biogenesis; lipopolysaccharide biosynthesis. Catalyzes the transfer of an acyl chain from an acyl-[acyl-carrier-protein] (ACP) to a Kdo(2)-(acyl)-lipid IV(A) to form a Kdo(2)-lipid A. The protein is Lipid A biosynthesis acyltransferase of Haemophilus influenzae (strain ATCC 51907 / DSM 11121 / KW20 / Rd).